Reading from the N-terminus, the 295-residue chain is GATA transcription factor 18 (295 aa).

The GATA-type zinc finger occupies 148–202 (SLLARRCANCDTTSTPLWRNGPRGPKSLCNACGIRFKKEERRTTAATGNTVVGAA).

Belongs to the type IV zinc-finger family. Class B subfamily. Homodimer. Forms heterodimers with GATA19, GATA22 and GATA21. Interacts with JAG. Binds to AGO10/PNH. Expressed in vegetative and inflorescence shoot apical meristems (SAMs), axillary (SAMs), floral meristems, developing ovules and stamens, vascular tissues, and in the embryo.

The protein localises to the nucleus. Its function is as follows. Transcriptional factor that specifically binds 5'-GATA-3' or 5'-GAT-3' motifs within gene promoters (including its own promoter and GATA21 promoter), thus regulating the expression of genes mostly involved in hormone responses and floral organ specification (including genes regulating hormones responses). Regulates both flower and shoot apical meristem (SAM) development, especially for establishing organ boundaries in shoots and flowers, probably by controlling the number and position of WUS-expressing cells. Coregulates, with AGO10/PNH, the shoot apical meristem (SAM) organization. Regulates floral organ development via the promotion of JAG and NPR5/BOP2 expression. Modulates cytokinin homeostasis in organ boundaries by regulating CKX3 expression. Involved in cell proliferation and differentiation. Required to position the inductive proembryo boundary via the regulation of gene expression and for early embryonic development. Together with GIF1/AN3, mediates cotyledon identity by preventing ectopic root formation through the repression of PLT1 expression. The polypeptide is GATA transcription factor 18 (Arabidopsis thaliana (Mouse-ear cress)).